We begin with the raw amino-acid sequence, 192 residues long: Density-regulated protein homolog (192 aa).

The interval 62 to 116 is disordered; sequence GLEISDEPAADGDEKKKQKRGGKGSKTGAAAAQAAASGGKKKGGGPQKVTLQREP. The span at 87 to 99 shows a compositional bias: low complexity; the sequence is KTGAAAAQAAASG. Residues 117–176 form the SUI1 domain; it reads RGKKSVTVIKGLATFDIDLKVASKLFAQKFACGSSVTGADEIVIQGDVKDDLLDLIPEKW.

It belongs to the DENR family.

The sequence is that of Density-regulated protein homolog from Caenorhabditis elegans.